The sequence spans 340 residues: Manganese-dependent ADP-ribose/CDP-alcohol diphosphatase (340 aa).

Met-1 is modified (N-acetylmethionine). Residues Asp-25, Gln-27, Asp-74, Asn-110, His-241, His-278, and His-280 each contribute to the Zn(2+) site.

This sequence belongs to the ADPRibase-Mn family. Monomer. Requires Mg(2+) as cofactor.

It catalyses the reaction CDP-choline + H2O = phosphocholine + CMP + 2 H(+). The enzyme catalyses ADP-D-ribose + H2O = D-ribose 5-phosphate + AMP + 2 H(+). The catalysed reaction is CDP-glycerol + H2O = sn-glycerol 3-phosphate + CMP + 2 H(+). In terms of biological role, hydrolyzes ADP-ribose, IDP-ribose, CDP-glycerol, CDP-choline and CDP-ethanolamine, but not other non-reducing ADP-sugars or CDP-glucose. May be involved in immune cell signaling as suggested by the second-messenger role of ADP-ribose, which activates TRPM2 as a mediator of oxidative/nitrosative stress. The polypeptide is Manganese-dependent ADP-ribose/CDP-alcohol diphosphatase (Adprm) (Mus musculus (Mouse)).